Consider the following 581-residue polypeptide: Sodium/hydrogen exchanger 8 (581 aa).

The next 11 membrane-spanning stretches (helical) occupy residues 60 to 80, 84 to 104, 123 to 143, 156 to 176, 191 to 211, 264 to 284, 311 to 331, 354 to 374, 379 to 399, 417 to 437, and 451 to 471; these read MTIFFSLLVLAICIILVHLLI, LHFLPESVAVVSLGILMGAVI, PNMFFLLLLPPIIFESGYSLH, LFAVFGTAISAFVVGGGIYFL, FAFGSLISAVDPVATIAIFNA, FLKMFFGSAALGTLTGLISAL, GLAEGISLSGIMAILFSGIVM, VAFLCETCVFAFLGLSIFSFP, ISFVIWCIVLVLFGRAVNIFP, MFIMWFSGLRGAIPYALSLHL, and TTIVIVLFTILLLGGSTMPLI. Threonine 510 is subject to Phosphothreonine. Phosphoserine occurs at positions 571 and 573.

Belongs to the monovalent cation:proton antiporter 1 (CPA1) transporter (TC 2.A.36) family. Ubiquitous. Strongly expressed in skeletal muscle and kidney. Detected throughout the entire gastrointestinal tract, with high expression detected in stomach, duodenum and ascending colon.

It is found in the golgi apparatus membrane. The protein resides in the golgi apparatus. It localises to the trans-Golgi network membrane. The protein localises to the endosome. Its subcellular location is the multivesicular body membrane. It is found in the apical cell membrane. The protein resides in the cytoplasmic vesicle. It localises to the secretory vesicle. The protein localises to the acrosome. The catalysed reaction is Na(+)(in) + H(+)(out) = Na(+)(out) + H(+)(in). HOE642 inhibits SLC9A8 activity. Its function is as follows. Na(+)/H(+) antiporter. Mediates the electoneutral exchange of intracellular H(+) ions for extracellular Na(+) in 1:1 stoichiometry. Acts as an Na(+)/H(+) exchanger in the trans-Golgi. Contributes to the regulation of pH regulation of Golgi apparatus, and consequently, in protein trafficking and endosomal morphology. In germ cells, plays a crucial role in acrosome biogenesis and sperm development, probably by playing a role in the fusion of the Golgi-derived vesicles that form the acrosomal cap. Can also be active at the cell surface of specialized cells. In the small intestine, at the cell membrane, plays a major physiological role in transepithelial absorption of Na(+) and regulates intracellular pH homeostasis of intestinal epithelial cells. Acts as an important regulator of mucosal integrity in the intestine and in the stomach, could mediate the pH fluctuation necessary for mucin exocytosis or assist membrane trafficking of other proteins. Plays a role in photoreceptor survival and in the maintenance of intracellular pH homeostasis in retinal pigment epithelium (RPE cells). The protein is Sodium/hydrogen exchanger 8 of Homo sapiens (Human).